The following is a 20-amino-acid chain: Dihydrolipoamide-residue succinyltransferase component of 2-oxoglutarate dehydrogenase complex (20 aa).

Belongs to the 2-oxoacid dehydrogenase family. Forms a 24-polypeptide structural core with octahedral symmetry. Requires (R)-lipoate as cofactor.

The protein resides in the mitochondrion membrane. The catalysed reaction is N(6)-[(R)-dihydrolipoyl]-L-lysyl-[protein] + succinyl-CoA = N(6)-[(R)-S(8)-succinyldihydrolipoyl]-L-lysyl-[protein] + CoA. It functions in the pathway amino-acid degradation; L-lysine degradation via saccharopine pathway; glutaryl-CoA from L-lysine: step 6/6. The 2-oxoglutarate dehydrogenase complex catalyzes the overall conversion of 2-oxoglutarate to succinyl-CoA and CO(2). It contains multiple copies of three enzymatic components: 2-oxoglutarate dehydrogenase (E1), dihydrolipoamide succinyltransferase (E2) and lipoamide dehydrogenase (E3). In Solanum tuberosum (Potato), this protein is Dihydrolipoamide-residue succinyltransferase component of 2-oxoglutarate dehydrogenase complex.